Consider the following 449-residue polypeptide: 3-phosphoshikimate 1-carboxyvinyltransferase (449 aa).

The disordered stretch occupies residues 1–29; it reads MSHDSVPSPITARAGTPLRGRLRPPGDKS. Lysine 28, serine 29, and arginine 33 together coordinate 3-phosphoshikimate. Lysine 28 is a binding site for phosphoenolpyruvate. Phosphoenolpyruvate-binding residues include glycine 101 and arginine 129. 3-phosphoshikimate contacts are provided by serine 175, glutamine 177, aspartate 330, and lysine 357. Position 177 (glutamine 177) interacts with phosphoenolpyruvate. Catalysis depends on aspartate 330, which acts as the Proton acceptor. Phosphoenolpyruvate contacts are provided by arginine 361 and arginine 405.

It belongs to the EPSP synthase family. Monomer.

It is found in the cytoplasm. The enzyme catalyses 3-phosphoshikimate + phosphoenolpyruvate = 5-O-(1-carboxyvinyl)-3-phosphoshikimate + phosphate. Its pathway is metabolic intermediate biosynthesis; chorismate biosynthesis; chorismate from D-erythrose 4-phosphate and phosphoenolpyruvate: step 6/7. In terms of biological role, catalyzes the transfer of the enolpyruvyl moiety of phosphoenolpyruvate (PEP) to the 5-hydroxyl of shikimate-3-phosphate (S3P) to produce enolpyruvyl shikimate-3-phosphate and inorganic phosphate. The sequence is that of 3-phosphoshikimate 1-carboxyvinyltransferase from Methylobacterium sp. (strain 4-46).